Here is a 687-residue protein sequence, read N- to C-terminus: MSKELLLEIGAEEIPAGFVPKALASLEEMIRKELETARLCFDAIVTMGTPRRLTLHIKGLPVIQPDAELTAMGPSKKAAFDADGKPTKAAEGFARGQGVDVSALQVISTDKGEYLAVTRQETGRPTHELLAEILPRLVAGIPFKKSMRWADLDIRFARPVHWIVALFDGIVVPFSFGPIQSGNISRGHRFMANSTFPVRDFAHYLDECERHFVIVDQERRKETIRKETHRVAKTTGGHLLPDESLLEEVTYLVEYPSAIIGSIPAEFLVVPKEVLITSMRSHQRYFSVVDENGKLLPYFITIPNTLAEDPAVVVRGNERVLRARLSDARFFFDEDRKLRLESRVESLKSVVYQQKLGTSYEKMERFRALAEQLAEQLNPAAKQQAARTAFLCKADLVSGMVGEFPEVQGIMGREYALHDGEETAVANAIAEHYLPTQAGGDLPASDIGAFVSLADKLDTLCGCFGVGLIPTGAADPYALRRATIGMISIILDKGYSLSLSGLIDKSLELLAAKLTRPRDEVRHDVLEFFRGRFVNLQGNAYPADVVEAAMAAGFDDLADCAERIRALDTFRQRDDFQPLTVAFKRVCNIIKEGIDAPVAPALFQDEAEHTLYRVLQETKLSASDKIQQQQYLEALTDIAGLKWAVDAFFDAVMVMAEDSAVRNNRLALLTTINRLFSRIADFGRLAG.

Belongs to the class-II aminoacyl-tRNA synthetase family. As to quaternary structure, tetramer of two alpha and two beta subunits.

The protein resides in the cytoplasm. It catalyses the reaction tRNA(Gly) + glycine + ATP = glycyl-tRNA(Gly) + AMP + diphosphate. The polypeptide is Glycine--tRNA ligase beta subunit (Trichlorobacter lovleyi (strain ATCC BAA-1151 / DSM 17278 / SZ) (Geobacter lovleyi)).